A 193-amino-acid polypeptide reads, in one-letter code: Ancillary SecYEG translocon subunit (193 aa).

The Cytoplasmic portion of the chain corresponds to 1–11 (MIKNSYINEKL). Residues 12 to 34 (NFYQKSFLTCMLLIVIVIVYFFS) traverse the membrane as a helical segment. Over 35–193 (KNYLDKPKNS…IIQMKINNYN (159 aa)) the chain is Extracellular.

This sequence belongs to the YfgM family. As to quaternary structure, interacts with the Sec translocon. Forms a complex with PpiD.

It localises to the cell membrane. In terms of biological role, may mediate protein transfer from the Sec translocon to the chaperone network via its extracellular C-terminal region. In Buchnera aphidicola subsp. Baizongia pistaciae (strain Bp), this protein is Ancillary SecYEG translocon subunit.